We begin with the raw amino-acid sequence, 122 residues long: NLLQFENMIRNVAGRSGIWWYSDYGCYCGKGGHGRPQDASDRCCFVHDCCYGKVNGCNPKKAVYIYSLENGDIVCGGDDPCRKEVCECDKAAAICFRDNKDTYDNKYWNIPSENCQEESEPC.

Intrachain disulfides connect C26–C115, C28–C44, C43–C95, C49–C122, C50–C88, C57–C81, and C75–C86. Ca(2+) contacts are provided by Y27, G29, and G31. The active site involves H47. D48 is a binding site for Ca(2+). The active site involves D89.

Belongs to the phospholipase A2 family. Group II subfamily. D49 sub-subfamily. The cofactor is Ca(2+). Expressed by the venom gland.

It localises to the secreted. It catalyses the reaction a 1,2-diacyl-sn-glycero-3-phosphocholine + H2O = a 1-acyl-sn-glycero-3-phosphocholine + a fatty acid + H(+). Snake venom phospholipase A2 (PLA2) that has high lipolytic activity. PLA2 catalyzes the calcium-dependent hydrolysis of the 2-acyl groups in 3-sn-phosphoglycerides. The chain is Acidic phospholipase A2 2 from Craspedocephalus gramineus (Bamboo pit viper).